A 417-amino-acid polypeptide reads, in one-letter code: Peptide chain release factor subunit 1 (417 aa).

Belongs to the eukaryotic release factor 1 family. In terms of assembly, heterodimer of two subunits, one of which binds GTP.

Its subcellular location is the cytoplasm. In terms of biological role, directs the termination of nascent peptide synthesis (translation) in response to the termination codons UAA, UAG and UGA. The chain is Peptide chain release factor subunit 1 (prf1) from Thermoplasma acidophilum (strain ATCC 25905 / DSM 1728 / JCM 9062 / NBRC 15155 / AMRC-C165).